Reading from the N-terminus, the 185-residue chain is Large ribosomal subunit protein uL5 (185 aa).

It belongs to the universal ribosomal protein uL5 family. In terms of assembly, part of the 50S ribosomal subunit; part of the 5S rRNA/L5/L18/L25 subcomplex. Contacts the 5S rRNA and the P site tRNA. Forms a bridge to the 30S subunit in the 70S ribosome.

In terms of biological role, this is one of the proteins that bind and probably mediate the attachment of the 5S RNA into the large ribosomal subunit, where it forms part of the central protuberance. In the 70S ribosome it contacts protein S13 of the 30S subunit (bridge B1b), connecting the 2 subunits; this bridge is implicated in subunit movement. Contacts the P site tRNA; the 5S rRNA and some of its associated proteins might help stabilize positioning of ribosome-bound tRNAs. The polypeptide is Large ribosomal subunit protein uL5 (Caulobacter sp. (strain K31)).